A 313-amino-acid chain; its full sequence is Protein-methionine-sulfoxide reductase catalytic subunit MsrP (313 aa).

The tat-type signal signal peptide spans 1–45 (MPAYRPPHIASSEITPKSFYLSRRNFLGTAAGLAAIGLAGREAIA). Mo-molybdopterin contacts are provided by residues N71, 74-75 (YE), C128, T163, N213, R218, and 229-231 (GIK).

Belongs to the MsrP family. As to quaternary structure, heterodimer of a catalytic subunit (MsrP) and a heme-binding subunit (MsrQ). Requires Mo-molybdopterin as cofactor. Predicted to be exported by the Tat system. The position of the signal peptide cleavage has not been experimentally proven.

It localises to the periplasm. The catalysed reaction is L-methionyl-[protein] + a quinone + H2O = L-methionyl-(S)-S-oxide-[protein] + a quinol. It catalyses the reaction L-methionyl-[protein] + a quinone + H2O = L-methionyl-(R)-S-oxide-[protein] + a quinol. In terms of biological role, part of the MsrPQ system that repairs oxidized periplasmic proteins containing methionine sulfoxide residues (Met-O), using respiratory chain electrons. Thus protects these proteins from oxidative-stress damage caused by reactive species of oxygen and chlorine generated by the host defense mechanisms. MsrPQ is essential for the maintenance of envelope integrity under bleach stress, rescuing a wide series of structurally unrelated periplasmic proteins from methionine oxidation. The catalytic subunit MsrP is non-stereospecific, being able to reduce both (R-) and (S-) diastereoisomers of methionine sulfoxide. The chain is Protein-methionine-sulfoxide reductase catalytic subunit MsrP from Agrobacterium fabrum (strain C58 / ATCC 33970) (Agrobacterium tumefaciens (strain C58)).